A 252-amino-acid chain; its full sequence is Triosephosphate isomerase (252 aa).

9–11 (NWK) provides a ligand contact to substrate. Histidine 95 serves as the catalytic Electrophile. Residue glutamate 167 is the Proton acceptor of the active site. Substrate is bound by residues glycine 173, serine 213, and 234-235 (GG).

This sequence belongs to the triosephosphate isomerase family. In terms of assembly, homodimer.

The protein localises to the cytoplasm. The catalysed reaction is D-glyceraldehyde 3-phosphate = dihydroxyacetone phosphate. It participates in carbohydrate biosynthesis; gluconeogenesis. It functions in the pathway carbohydrate degradation; glycolysis; D-glyceraldehyde 3-phosphate from glycerone phosphate: step 1/1. Functionally, involved in the gluconeogenesis. Catalyzes stereospecifically the conversion of dihydroxyacetone phosphate (DHAP) to D-glyceraldehyde-3-phosphate (G3P). The protein is Triosephosphate isomerase of Syntrophotalea carbinolica (strain DSM 2380 / NBRC 103641 / GraBd1) (Pelobacter carbinolicus).